A 234-amino-acid polypeptide reads, in one-letter code: MAKLTKRMRVIREKVDATKQYDINEAIALLKELATAKFVESVDVAVNLGIDARKSDQNVRGATVLPHGTGRSVRVAVFTQGANAEAAKAAGAELVGMEDLADQIKKGEMNFDVVIASPDAMRVVGQLGQVLGPRGLMPNPKVGTVTPNVAEAVKNAKAGQIRYRNDKNGIIHTTIGKVDFDADKLKENLEALLVALKKAKPTQAKGVYIKKVSISTTMGAGVAVDQAGLSASVN.

This sequence belongs to the universal ribosomal protein uL1 family. Part of the 50S ribosomal subunit.

In terms of biological role, binds directly to 23S rRNA. The L1 stalk is quite mobile in the ribosome, and is involved in E site tRNA release. Its function is as follows. Protein L1 is also a translational repressor protein, it controls the translation of the L11 operon by binding to its mRNA. This chain is Large ribosomal subunit protein uL1, found in Escherichia coli O127:H6 (strain E2348/69 / EPEC).